Here is a 390-residue protein sequence, read N- to C-terminus: Pyruvate dehydrogenase E1 component subunit alpha, somatic form, mitochondrial (390 aa).

The transit peptide at 1–29 (MRKMLAAVSRVLAGAAQKPASRVLVASRN) directs the protein to the mitochondrion. Lysine 63 carries the post-translational modification N6-acetyllysine; alternate. N6-succinyllysine; alternate is present on lysine 63. 11 residues coordinate pyruvate: histidine 92, tyrosine 118, arginine 119, alanine 157, glycine 165, valine 167, aspartate 196, glycine 197, alanine 198, asparagine 225, and tyrosine 227. The thiamine diphosphate site is built by tyrosine 118 and arginine 119. Positions 165, 167, 196, 197, 198, and 225 each coordinate thiamine diphosphate. Residue aspartate 196 coordinates Mg(2+). Mg(2+) contacts are provided by asparagine 225 and tyrosine 227. The residue at position 232 (serine 232) is a Phosphoserine; by PDK1. Lysine 244 carries the post-translational modification N6-acetyllysine; alternate. Residue lysine 244 is modified to N6-succinyllysine; alternate. An N6-acetyllysine modification is found at lysine 267. Lysine 277 bears the N6-succinyllysine mark. Histidine 292 serves as a coordination point for thiamine diphosphate. Serine 293 is modified (phosphoserine; by PDK1, PDK2, PDK3 and PDK4). A Phosphoserine modification is found at serine 295. Serine 300 carries the phosphoserine; by PDK1, PDK2, PDK3 and PDK4 modification. The residue at position 301 (tyrosine 301) is a Phosphotyrosine. At lysine 313 the chain carries N6-acetyllysine; alternate. Lysine 313 is subject to N6-succinyllysine; alternate. N6-acetyllysine is present on residues lysine 321 and lysine 336. Residue lysine 385 is modified to N6-succinyllysine.

In terms of assembly, heterotetramer of two PDHA1 and two PDHB subunits. The heterotetramer interacts with DLAT, and is part of the multimeric pyruvate dehydrogenase complex that contains multiple copies of pyruvate dehydrogenase (E1), dihydrolipoamide acetyltransferase (DLAT, E2) and lipoamide dehydrogenase (DLD, E3). These subunits are bound to an inner core composed of about 48 DLAT and 12 PDHX molecules. Requires thiamine diphosphate as cofactor. Mg(2+) serves as cofactor. In terms of processing, phosphorylation at Ser-232, Ser-293 and Ser-300 by PDK family kinases inactivates the enzyme; for this phosphorylation at a single site is sufficient. Phosphorylation at Ser-293 interferes with access to active site, and thereby inactivates the enzyme. Dephosphorylation at all three sites, i.e. at Ser-232, Ser-293 and Ser-300, is required for reactivation. Acetylation alters the phosphorylation pattern. Deacetylated by SIRT3. In all tissues, but in very low amount in testis.

Its subcellular location is the mitochondrion matrix. The enzyme catalyses N(6)-[(R)-lipoyl]-L-lysyl-[protein] + pyruvate + H(+) = N(6)-[(R)-S(8)-acetyldihydrolipoyl]-L-lysyl-[protein] + CO2. Pyruvate dehydrogenase activity is inhibited by phosphorylation of PDHA1; it is reactivated by dephosphorylation. Its function is as follows. The pyruvate dehydrogenase complex catalyzes the overall conversion of pyruvate to acetyl-CoA and CO(2), and thereby links the glycolytic pathway to the tricarboxylic cycle. The protein is Pyruvate dehydrogenase E1 component subunit alpha, somatic form, mitochondrial (Pdha1) of Rattus norvegicus (Rat).